The primary structure comprises 279 residues: MSTAVLDAPKAATDHPERQYLTLLADILENGVQRGDRTGTGTLGVFGRQIRFDLAKGFPVLTTKKLHLRSIIIELLWFLKGDTNIAYLKDNGVRIWDEWADENGDLGPVYGKQWRSWATPDGRVIDQISALVENLKANPNSRRHIVTAWNPADVDDMALPPCHCLFQFFVADGKLSCQLYQRSADVFLGVPFNIASYALLTLMVAKVVGLEPGEFVHTFGDAHLYLNHLDQAREQLTREPFDFPTMKIADKRDLFGFEYEDFTLEGYQAHPHIKAEVSV.

Arg37 lines the dUMP pocket. His67 provides a ligand contact to (6R)-5,10-methylene-5,6,7,8-tetrahydrofolate. 142–143 (RR) is a dUMP binding site. Cys162 acts as the Nucleophile in catalysis. Residues 182–185 (RSAD), Asn193, and 223–225 (HLY) each bind dUMP. Asp185 provides a ligand contact to (6R)-5,10-methylene-5,6,7,8-tetrahydrofolate. Ser278 contributes to the (6R)-5,10-methylene-5,6,7,8-tetrahydrofolate binding site.

It belongs to the thymidylate synthase family. Bacterial-type ThyA subfamily. As to quaternary structure, homodimer.

Its subcellular location is the cytoplasm. The enzyme catalyses dUMP + (6R)-5,10-methylene-5,6,7,8-tetrahydrofolate = 7,8-dihydrofolate + dTMP. It functions in the pathway pyrimidine metabolism; dTTP biosynthesis. In terms of biological role, catalyzes the reductive methylation of 2'-deoxyuridine-5'-monophosphate (dUMP) to 2'-deoxythymidine-5'-monophosphate (dTMP) while utilizing 5,10-methylenetetrahydrofolate (mTHF) as the methyl donor and reductant in the reaction, yielding dihydrofolate (DHF) as a by-product. This enzymatic reaction provides an intracellular de novo source of dTMP, an essential precursor for DNA biosynthesis. The chain is Thymidylate synthase from Caulobacter vibrioides (strain ATCC 19089 / CIP 103742 / CB 15) (Caulobacter crescentus).